Reading from the N-terminus, the 493-residue chain is Cysteine sulfinic acid decarboxylase (493 aa).

N6-(pyridoxal phosphate)lysine is present on K305.

This sequence belongs to the group II decarboxylase family. Homodimer. Pyridoxal 5'-phosphate is required as a cofactor. Expressed in liver and brain. Also expressed in both astrocytes and neurons, but lower levels are expressed in astrocytes.

The catalysed reaction is L-aspartate + H(+) = beta-alanine + CO2. It carries out the reaction 3-sulfino-L-alanine + H(+) = hypotaurine + CO2. The enzyme catalyses L-cysteate + H(+) = taurine + CO2. The protein operates within organosulfur biosynthesis; taurine biosynthesis; hypotaurine from L-cysteine: step 2/2. Functionally, catalyzes the decarboxylation of L-aspartate, 3-sulfino-L-alanine (cysteine sulfinic acid), and L-cysteate to beta-alanine, hypotaurine and taurine, respectively. The preferred substrate is 3-sulfino-L-alanine. Does not exhibit any decarboxylation activity toward glutamate. This Homo sapiens (Human) protein is Cysteine sulfinic acid decarboxylase (CSAD).